The following is a 64-amino-acid chain: Frontoxin V (64 aa).

5 cysteine pairs are disulfide-bonded: Cys-3-Cys-24, Cys-6-Cys-11, Cys-17-Cys-41, Cys-45-Cys-57, and Cys-58-Cys-63.

Expressed by the venom gland.

The protein localises to the secreted. Functionally, produces peripheral paralysis by blocking neuromuscular transmission at the postsynaptic site. Binds to the muscular nicotinic acetylcholine receptor (nAChR). In Micrurus frontalis (Coral snake), this protein is Frontoxin V.